Here is a 341-residue protein sequence, read N- to C-terminus: Probable 2' cyclic ADP-D-ribose synthase TcpO (341 aa).

Residues 204 to 336 (KEYDIFVSHS…EIIHEILERI (133 aa)) form the TIR domain. NAD(+) is bound by residues 213–214 (SS) and Lys243. Residue Glu279 is part of the active site.

The catalysed reaction is NAD(+) + H2O = ADP-D-ribose + nicotinamide + H(+). The enzyme catalyses NAD(+) = 2'cADPR + nicotinamide + H(+). In terms of biological role, NAD(+) hydrolase (NADase) that catalyzes cleavage of NAD(+) into ADP-D-ribose (ADPR) and nicotinamide. In addition to ADPR, also generates a cyclization variant of cyclic ADPR (cADPR), termed v-cADPR (probably 2'cADPR). This chain is Probable 2' cyclic ADP-D-ribose synthase TcpO, found in Methanobrevibacter olleyae.